The following is a 209-amino-acid chain: Thymidylate kinase (209 aa).

10–17 serves as a coordination point for ATP; sequence GIDGCGKS.

This sequence belongs to the thymidylate kinase family.

It carries out the reaction dTMP + ATP = dTDP + ADP. Functionally, phosphorylation of dTMP to form dTDP in both de novo and salvage pathways of dTTP synthesis. This Parasynechococcus marenigrum (strain WH8102) protein is Thymidylate kinase.